Reading from the N-terminus, the 408-residue chain is Aminomethyltransferase, mitochondrial (408 aa).

Residues 1–30 constitute a mitochondrion transit peptide; it reads MRGGGLWQLGQSVTRRLAQAEKKVIARRCF. Substrate is bound by residues E235, R266, and Y404.

This sequence belongs to the GcvT family. The glycine cleavage system is composed of four proteins: P, T, L and H.

The protein localises to the mitochondrion. The catalysed reaction is N(6)-[(R)-S(8)-aminomethyldihydrolipoyl]-L-lysyl-[protein] + (6S)-5,6,7,8-tetrahydrofolate = N(6)-[(R)-dihydrolipoyl]-L-lysyl-[protein] + (6R)-5,10-methylene-5,6,7,8-tetrahydrofolate + NH4(+). Its function is as follows. The glycine cleavage system catalyzes the degradation of glycine. This is Aminomethyltransferase, mitochondrial (GDCST) from Mesembryanthemum crystallinum (Common ice plant).